A 298-amino-acid chain; its full sequence is Mitochondrial basic amino acids transporter (298 aa).

The next 6 membrane-spanning stretches (helical) occupy residues 2 to 22 (ALDF…GHPF), 61 to 81 (GLGS…GVQG), 96 to 116 (FLAG…MELA), 153 to 172 (GMVS…FLTY), 187 to 207 (LLVP…WLST), and 255 to 275 (LLRA…VLSY). 3 Solcar repeats span residues 2-86 (ALDF…TLRA), 90-178 (DSPL…LTRA), and 185-275 (DRLL…VLSY).

The protein belongs to the mitochondrial carrier (TC 2.A.29) family.

The protein localises to the mitochondrion inner membrane. It carries out the reaction L-lysine(out) + L-arginine(in) = L-lysine(in) + L-arginine(out). It catalyses the reaction L-histidine(out) + L-arginine(in) = L-histidine(in) + L-arginine(out). The enzyme catalyses L-ornithine(in) + L-arginine(out) = L-ornithine(out) + L-arginine(in). The catalysed reaction is L-homoarginine(in) + L-arginine(out) = L-homoarginine(out) + L-arginine(in). It carries out the reaction N(omega)-methyl-L-arginine(in) + L-arginine(out) = N(omega)-methyl-L-arginine(out) + L-arginine(in). It catalyses the reaction L-arginine(in) = L-arginine(out). The enzyme catalyses L-lysine(in) = L-lysine(out). The catalysed reaction is L-ornithine(in) = L-ornithine(out). It carries out the reaction L-histidine(out) = L-histidine(in). Functionally, mitochondrial transporter of arginine, lysine, homoarginine, methylarginine and, to a much lesser extent, ornithine and histidine. Does not transport carnitine nor acylcarnitines. Functions by both counter-exchange and uniport mechanisms. Plays a physiological role in the import of basic amino acids into mitochondria for mitochondrial protein synthesis and amino acid degradation. This chain is Mitochondrial basic amino acids transporter (SLC25A29), found in Bos taurus (Bovine).